The chain runs to 529 residues: MGEQLSPDEKFQLITRNLQEVLGEERLKEILKERELKVYWGTATTGKPHVAYFVPMSKIADFLKAGCEVTILFADLHAYLDNMKAPWELLELRVKYYEQVIKAMLESIGVPLDKLKFVKGTDYQLSREYTLDVYRLSSMVTEHDAKKAGAEVVKQVEHPLLSGLLYPGLQALDEEYLKVDAQFGGVDQRKIFTLAEKYLPSLGYTKRSHLMNPMVPGLTGSKMSSSEEESKIDLLDKNQDVKKKLKKAFCEPGNVENNGVLSFVKHVLFPLHSEFVIKRDPKFGGDKVYTDFEEVEKDFAAEQIHPGDLKASVELALNKLLDPIRKKFESPELKKLTSSAYPEPSKNKGGVKGNPKQTTDDDEVIPSRLDIRVGKVISVEKHPDADSLYLEKIDVGEEQPRTVVSGLVAYITEEQLQDRLVVLLCNLKPQKMRGIESQAMVLCASIEGEPRKVEPLDPPEGSAAGDRVYVEGYESGKPDDELKPKKKVFEKLQVDLKISGEFVAQWKEQNLMTKLGRITCKTLKGGNIS.

Tyrosine 39 contributes to the L-tyrosine binding site. The 'HIGH' region motif lies at 44–52 (TTGKPHVAY). Residues tyrosine 166, glutamine 170, aspartate 173, and glutamine 188 each contribute to the L-tyrosine site. Residues 222–226 (KMSSS) carry the 'KMSKS' region motif. Residues 242 to 247 (KKKLKK) carry the Nuclear localization signal motif. A disordered region spans residues 335–362 (KLTSSAYPEPSKNKGGVKGNPKQTTDDD). Residues 365-469 (IPSRLDIRVG…EGSAAGDRVY (105 aa)) form the tRNA-binding domain.

The protein belongs to the class-I aminoacyl-tRNA synthetase family. In terms of assembly, homodimer.

The protein localises to the cytoplasm. It localises to the nucleus. It carries out the reaction tRNA(Tyr) + L-tyrosine + ATP = L-tyrosyl-tRNA(Tyr) + AMP + diphosphate + H(+). In terms of biological role, catalyzes the attachment of tyrosine to tRNA(Tyr) in a two-step reaction: tyrosine is first activated by ATP to form Tyr-AMP and then transferred to the acceptor end of tRNA(Tyr). This Danio rerio (Zebrafish) protein is Tyrosine--tRNA ligase, cytoplasmic (yars1).